The primary structure comprises 559 residues: Small ribosomal subunit protein bS1 (559 aa).

S1 motif domains are found at residues 21–87 (GSII…LSRE), 105–171 (SETV…VSRR), 192–260 (GIEI…LGLK), 277–347 (GIKL…LGLK), 364–434 (GIHV…LGIK), and 451–520 (GAII…LTFH).

The protein belongs to the bacterial ribosomal protein bS1 family.

Functionally, binds mRNA; thus facilitating recognition of the initiation point. It is needed to translate mRNA with a short Shine-Dalgarno (SD) purine-rich sequence. The protein is Small ribosomal subunit protein bS1 (rpsA) of Buchnera aphidicola subsp. Schizaphis graminum (strain Sg).